The following is a 271-amino-acid chain: Tryptophan synthase alpha chain (271 aa).

Active-site proton acceptor residues include E59 and D70.

The protein belongs to the TrpA family. Tetramer of two alpha and two beta chains.

The enzyme catalyses (1S,2R)-1-C-(indol-3-yl)glycerol 3-phosphate + L-serine = D-glyceraldehyde 3-phosphate + L-tryptophan + H2O. Its pathway is amino-acid biosynthesis; L-tryptophan biosynthesis; L-tryptophan from chorismate: step 5/5. Functionally, the alpha subunit is responsible for the aldol cleavage of indoleglycerol phosphate to indole and glyceraldehyde 3-phosphate. The polypeptide is Tryptophan synthase alpha chain (Methanosarcina mazei (strain ATCC BAA-159 / DSM 3647 / Goe1 / Go1 / JCM 11833 / OCM 88) (Methanosarcina frisia)).